The sequence spans 231 residues: Large ribosomal subunit protein uL1 (231 aa).

This sequence belongs to the universal ribosomal protein uL1 family. As to quaternary structure, part of the 50S ribosomal subunit.

Its function is as follows. Binds directly to 23S rRNA. The L1 stalk is quite mobile in the ribosome, and is involved in E site tRNA release. Functionally, protein L1 is also a translational repressor protein, it controls the translation of the L11 operon by binding to its mRNA. This is Large ribosomal subunit protein uL1 from Kosmotoga olearia (strain ATCC BAA-1733 / DSM 21960 / TBF 19.5.1).